The primary structure comprises 213 residues: MKPYQRQFIEFALGKQVLKFGEFTLKSGRKSPYFFNAGLFNTGRDLALLGRFYAEALVDSGLEFDLLFGPAYKGIPIATTTAVALAEHHDLDLPYCFNRKEAKDHGEGGNLVGSALQGRVMLVDDVITAGTAIRESMEIIQANGATLAGVLISLDRQERGRSEISAIQEVERDYNCKVISIITLKDLIAYLEEKPEMAEHLAAVKAYREEFGV.

K26 lines the 5-phospho-alpha-D-ribose 1-diphosphate pocket. 34-35 (FF) lines the orotate pocket. Residues 72–73 (YK), R99, K100, K103, H105, and 124–132 (DDVITAGTA) each bind 5-phospho-alpha-D-ribose 1-diphosphate. Orotate-binding residues include T128 and R156.

Belongs to the purine/pyrimidine phosphoribosyltransferase family. PyrE subfamily. As to quaternary structure, homodimer. Mg(2+) serves as cofactor.

The enzyme catalyses orotidine 5'-phosphate + diphosphate = orotate + 5-phospho-alpha-D-ribose 1-diphosphate. It functions in the pathway pyrimidine metabolism; UMP biosynthesis via de novo pathway; UMP from orotate: step 1/2. Its function is as follows. Catalyzes the transfer of a ribosyl phosphate group from 5-phosphoribose 1-diphosphate to orotate, leading to the formation of orotidine monophosphate (OMP). This Escherichia coli O139:H28 (strain E24377A / ETEC) protein is Orotate phosphoribosyltransferase.